The primary structure comprises 137 residues: ATP synthase epsilon chain, chloroplastic (137 aa).

The protein belongs to the ATPase epsilon chain family. In terms of assembly, F-type ATPases have 2 components, CF(1) - the catalytic core - and CF(0) - the membrane proton channel. CF(1) has five subunits: alpha(3), beta(3), gamma(1), delta(1), epsilon(1). CF(0) has three main subunits: a, b and c.

It localises to the plastid. Its subcellular location is the chloroplast thylakoid membrane. In terms of biological role, produces ATP from ADP in the presence of a proton gradient across the membrane. This chain is ATP synthase epsilon chain, chloroplastic, found in Sorghum bicolor (Sorghum).